A 282-amino-acid chain; its full sequence is Bicarbonate transport ATP-binding protein CmpD (282 aa).

An ABC transporter domain is found at 24–257; the sequence is LTIENVSKVY…RPRDRDRIME (234 aa). 60–67 contributes to the ATP binding site; that stretch reads GHSGCGKS.

It belongs to the ABC transporter superfamily. Nitrate/nitrite/cyanate uptake transporter (NitT) (TC 3.A.1.16) family. In terms of assembly, the complex is composed of two ATP-binding proteins (CmpC and CmpD), a transmembrane protein (CmpB) and a solute-binding protein (CmpA).

The protein localises to the cell inner membrane. In terms of biological role, part of the ABC transporter complex CmpABCD involved in bicarbonate transport. Responsible for energy coupling to the transport system. The protein is Bicarbonate transport ATP-binding protein CmpD (cmpD) of Synechocystis sp. (strain ATCC 27184 / PCC 6803 / Kazusa).